The chain runs to 505 residues: 6-phosphofructo-2-kinase/fructose-2,6-bisphosphatase 2 (505 aa).

Positions 1 to 20 (MSGASSSEQNNNSYETKTPN) are disordered. Position 2 is an N-acetylserine (S2). A 6-phosphofructo-2-kinase region spans residues 2–248 (SGASSSEQNN…VYYLMNIHVQ (247 aa)). Phosphoserine; by PKA is present on S29. 45–53 (GLPARGKTY) contacts ATP. Beta-D-fructose 6-phosphate contacts are provided by R78 and R102. D128 is a catalytic residue. The beta-D-fructose 6-phosphate site is built by T130 and R136. C158 is a catalytic residue. 167-172 (NILEVK) is an ATP binding site. Beta-D-fructose 6-phosphate contacts are provided by K172, R193, and Y197. The interval 249–505 (PRTIYLCRHG…RAQDMQEGAD (257 aa)) is fructose-2,6-bisphosphatase. Residue R256 participates in beta-D-fructose 2,6-bisphosphate binding. H257 serves as the catalytic Tele-phosphohistidine intermediate. 2 residues coordinate beta-D-fructose 2,6-bisphosphate: N263 and G269. E326 acts as the Proton donor/acceptor in catalysis. Residues Y337, R351, K355, Y366, Q392, and R396 each contribute to the beta-D-fructose 2,6-bisphosphate site. 348 to 351 (FALR) provides a ligand contact to ATP. ATP contacts are provided by residues 392 to 396 (QAVMR) and Y428. The tract at residues 445–505 (HRDKPTNNFP…RAQDMQEGAD (61 aa)) is disordered. The segment covering 450-476 (TNNFPKNQTPVRMRRNSFTPLSSSNTI) has biased composition (polar residues). The residue at position 466 (S466) is a Phosphoserine; by AMPK. T468 and T475 each carry phosphothreonine. A Phosphoserine; by BRAF modification is found at S483. Phosphoserine occurs at positions 486 and 493.

This sequence in the C-terminal section; belongs to the phosphoglycerate mutase family. In terms of assembly, homodimer. Forms a heterodimer with PFKFB3. In terms of processing, phosphorylation by AMPK stimulates activity. In terms of tissue distribution, heart.

It carries out the reaction beta-D-fructose 2,6-bisphosphate + H2O = beta-D-fructose 6-phosphate + phosphate. It catalyses the reaction beta-D-fructose 6-phosphate + ATP = beta-D-fructose 2,6-bisphosphate + ADP + H(+). Phosphorylation results in the activation of the kinase activity. In terms of biological role, synthesis and degradation of fructose 2,6-bisphosphate. This chain is 6-phosphofructo-2-kinase/fructose-2,6-bisphosphatase 2, found in Homo sapiens (Human).